We begin with the raw amino-acid sequence, 341 residues long: Phosphoribosylformylglycinamidine cyclo-ligase (341 aa).

It belongs to the AIR synthase family.

Its subcellular location is the cytoplasm. The catalysed reaction is 2-formamido-N(1)-(5-O-phospho-beta-D-ribosyl)acetamidine + ATP = 5-amino-1-(5-phospho-beta-D-ribosyl)imidazole + ADP + phosphate + H(+). The protein operates within purine metabolism; IMP biosynthesis via de novo pathway; 5-amino-1-(5-phospho-D-ribosyl)imidazole from N(2)-formyl-N(1)-(5-phospho-D-ribosyl)glycinamide: step 2/2. The polypeptide is Phosphoribosylformylglycinamidine cyclo-ligase (Xanthomonas campestris pv. campestris (strain B100)).